Here is a 255-residue protein sequence, read N- to C-terminus: Small ribosomal subunit protein uS2 (255 aa).

The interval 232 to 255 (ASGRDLGASEEVPVEPALEEASEA) is disordered.

This sequence belongs to the universal ribosomal protein uS2 family.

In Sinorhizobium medicae (strain WSM419) (Ensifer medicae), this protein is Small ribosomal subunit protein uS2.